The following is a 348-amino-acid chain: Ion-translocating oxidoreductase complex subunit D (348 aa).

The next 5 membrane-spanning stretches (helical) occupy residues 15–35, 36–56, 67–87, 88–108, and 125–145; these read LTAK…GMQA, YFFG…AVAI, LTAF…LAIS, IPPY…LLLA, and VAYA…LVPI. Residue threonine 186 is modified to FMN phosphoryl threonine. The next 5 helical transmembrane spans lie at 212-232, 241-261, 265-285, 298-318, and 320-340; these read LFAN…LLLI, IPAA…LLLP, LNVV…FIAT, LIFG…GNYP, and AVAF…HYTQ.

The protein belongs to the NqrB/RnfD family. In terms of assembly, the complex is composed of six subunits: RnfA, RnfB, RnfC, RnfD, RnfE and RnfG. Requires FMN as cofactor.

It is found in the cell inner membrane. Functionally, part of a membrane-bound complex that couples electron transfer with translocation of ions across the membrane. The polypeptide is Ion-translocating oxidoreductase complex subunit D (Actinobacillus pleuropneumoniae serotype 3 (strain JL03)).